The following is a 275-amino-acid chain: Interleukin-2 receptor subunit alpha (275 aa).

The N-terminal stretch at 1–21 (MEPSLLMWRFFVFIVVPGCVT) is a signal peptide. The Sushi 1 domain occupies 22–81 (EACHDDPPSLRNAMFKVFRYEVGTMINCDCKTGFRRVSAVMRCVGDSSHSAWENRCFCNS). At 22–243 (EACHDDPPSL…DTFIFTTEYQ (222 aa)) the chain is on the extracellular side. Intrachain disulfides connect Cys24–Cys64, Cys49–Cys77, and Cys51–Cys79. Asn80 carries N-linked (GlcNAc...) asparagine glycosylation. Residues 88–130 (QVKQVTPAPEEHREKKHTDAQNQTQPPEEADLPGHCEEPPPWE) form a disordered region. Residues 96–106 (PEEHREKKHTD) are compositionally biased toward basic and acidic residues. The N-linked (GlcNAc...) asparagine glycan is linked to Asn109. Basic and acidic residues predominate over residues 119-130 (LPGHCEEPPPWE). Residues 121-186 (GHCEEPPPWE…WTRPRLKCIR (66 aa)) form the Sushi 2 domain. Disulfide bonds link Cys123/Cys168 and Cys152/Cys184. The disordered stretch occupies residues 188-221 (GEHGQASDDAEPQESTEAPPGSGTFLPTRMAGTT). Residues 244-262 (IAVAGCTLLLASILLLSCL) traverse the membrane as a helical segment. The Cytoplasmic segment spans residues 263–275 (TWQRKWKKNRRTI).

In terms of assembly, non-covalent dimer of an alpha and a beta subunit. IL2R exists in 3 different forms: a high affinity dimer, an intermediate affinity monomer (beta subunit), and a low affinity monomer (alpha subunit). The high and intermediate affinity forms also associate with a gamma subunit.

The protein resides in the membrane. Functionally, receptor for interleukin-2. The receptor is involved in the regulation of immune tolerance by controlling regulatory T cells (TREGs) activity. TREGs suppress the activation and expansion of autoreactive T-cells. The chain is Interleukin-2 receptor subunit alpha (IL2RA) from Bos taurus (Bovine).